A 364-amino-acid polypeptide reads, in one-letter code: Glycerol dehydrogenase (364 aa).

Residues aspartate 37, glycine 92, lysine 93, threonine 114, and serine 117 each contribute to the NAD(+) site. Aspartate 119 contributes to the glycerol binding site. The NAD(+) site is built by serine 123, leucine 125, and tyrosine 129. Glycerol-binding residues include aspartate 169, histidine 252, and histidine 269. 3 residues coordinate Zn(2+): aspartate 169, histidine 252, and histidine 269.

The protein belongs to the iron-containing alcohol dehydrogenase family. Requires Zn(2+) as cofactor.

The catalysed reaction is glycerol + NAD(+) = dihydroxyacetone + NADH + H(+). It functions in the pathway polyol metabolism; glycerol fermentation; glycerone phosphate from glycerol (oxidative route): step 1/2. Catalyzes the NAD-dependent oxidation of glycerol to dihydroxyacetone (glycerone). This is Glycerol dehydrogenase (gldA) from Thermotoga maritima (strain ATCC 43589 / DSM 3109 / JCM 10099 / NBRC 100826 / MSB8).